A 503-amino-acid polypeptide reads, in one-letter code: Trehalose-6-phosphate synthase (503 aa).

Residues 1-14 (MTDQSGNGVRSGSA) are compositionally biased toward polar residues. Residues 1–20 (MTDQSGNGVRSGSASEAPPS) form a disordered region. Arginine 31 serves as a coordination point for D-glucose 6-phosphate. 51–52 (GG) is a UDP-alpha-D-glucose binding site. Tyrosine 109 and aspartate 163 together coordinate D-glucose 6-phosphate. UDP-alpha-D-glucose contacts are provided by arginine 305 and lysine 310. Arginine 343 provides a ligand contact to D-glucose 6-phosphate. 408–412 (LVAKE) is a UDP-alpha-D-glucose binding site.

It belongs to the glycosyltransferase 20 family. Homotetramer.

It catalyses the reaction ADP-alpha-D-glucose + D-glucose 6-phosphate = alpha,alpha-trehalose 6-phosphate + ADP + H(+). The enzyme catalyses CDP-alpha-D-glucose + D-glucose 6-phosphate = alpha,alpha-trehalose 6-phosphate + CDP + H(+). The catalysed reaction is GDP-alpha-D-glucose + D-glucose 6-phosphate = alpha,alpha-trehalose 6-phosphate + GDP + H(+). It carries out the reaction TDP-alpha-D-glucose + D-glucose 6-phosphate = 5-methyl-UDP + alpha,alpha-trehalose 6-phosphate + H(+). It catalyses the reaction D-glucose 6-phosphate + UDP-alpha-D-glucose = alpha,alpha-trehalose 6-phosphate + UDP + H(+). Its pathway is glycan biosynthesis; trehalose biosynthesis. Probably involved in the osmoprotection via the biosynthesis of trehalose and in the production of glycogen and alpha-glucan via the TreS-Pep2 branch involved in the biosynthesis of maltose-1-phosphate (M1P). Catalyzes the transfer of glucose from UDP-glucose (UDP-Glc) to D-glucose 6-phosphate (Glc-6-P) to form trehalose-6-phosphate. Probably also able to use ADP-Glc, CDP-Glc, GDP-Glc and TDP-Glc as glucosyl donors. This is Trehalose-6-phosphate synthase from Mycolicibacterium gilvum (strain PYR-GCK) (Mycobacterium gilvum (strain PYR-GCK)).